Consider the following 537-residue polypeptide: Cytochrome P450 4F6 (537 aa).

C468 contributes to the heme binding site.

It belongs to the cytochrome P450 family. Heme serves as cofactor. High expression in liver and kidney. Lower expression in brain.

It localises to the endoplasmic reticulum membrane. Its subcellular location is the microsome membrane. The enzyme catalyses an organic molecule + reduced [NADPH--hemoprotein reductase] + O2 = an alcohol + oxidized [NADPH--hemoprotein reductase] + H2O + H(+). The sequence is that of Cytochrome P450 4F6 (Cyp4f6) from Rattus norvegicus (Rat).